A 215-amino-acid chain; its full sequence is MCQSRYLLFLATLALLNHLSLARVIPVSGPARCLSQSRNLLKTTDDMVKTAREKLKHYSCTAEDIDHEDITRDQTSTLKTCLPLELHKNESCLATRETSSTTRGSCLPPQKTSLMMTLCLGSIYEDLKMYQTEFQAINAALQNHNHQQIILDKGMLVAIDELMQSLNHNGETLRQKPPVGEADPYRVKMKLCILLHAFSTRVVTINRVMGYLSSA.

A signal peptide spans Met-1 to Ala-22. Intrachain disulfides connect Cys-33-Cys-106, Cys-60-Cys-192, and Cys-81-Cys-119. Asn-89 carries an N-linked (GlcNAc...) asparagine glycan.

It belongs to the IL-6 superfamily. As to quaternary structure, heterodimer with IL12B; disulfide-linked. This heterodimer is known as interleukin IL-12. Heterodimer with EBI3/IL27B; not disulfide-linked. This heterodimer is known as interleukin IL-35. Interacts with NBR1; this interaction promotes IL-12 secretion.

It is found in the secreted. Heterodimerizes with IL12B to form the IL-12 cytokine or with EBI3/IL27B to form the IL-35 cytokine. IL-12 is primarily produced by professional antigen-presenting cells (APCs) such as B-cells and dendritic cells (DCs) as well as macrophages and granulocytes and regulates T-cell and natural killer-cell responses, induces the production of interferon-gamma (IFN-gamma), favors the differentiation of T-helper 1 (Th1) cells and is an important link between innate resistance and adaptive immunity. Mechanistically, exerts its biological effects through a receptor composed of IL12R1 and IL12R2 subunits. Binding to the receptor results in the rapid tyrosine phosphorylation of a number of cellular substrates including the JAK family kinases TYK2 and JAK2. In turn, recruited STAT4 gets phosphorylated and translocates to the nucleus where it regulates cytokine/growth factor responsive genes. As part of IL-35, plays essential roles in maintaining the immune homeostasis of the liver microenvironment and also functions as an immune-suppressive cytokine. Mediates biological events through unconventional receptors composed of IL12RB2 and gp130/IL6ST heterodimers or homodimers. Signaling requires the transcription factors STAT1 and STAT4, which form a unique heterodimer that binds to distinct DNA sites. This is Interleukin-12 subunit alpha (Il12a) from Mus musculus (Mouse).